The primary structure comprises 632 residues: DNA mismatch repair protein MutL (632 aa).

The tract at residues 376–397 (EQPQAEPRQSFTPGSGAGSGYQ) is disordered.

The protein belongs to the DNA mismatch repair MutL/HexB family.

This protein is involved in the repair of mismatches in DNA. It is required for dam-dependent methyl-directed DNA mismatch repair. May act as a 'molecular matchmaker', a protein that promotes the formation of a stable complex between two or more DNA-binding proteins in an ATP-dependent manner without itself being part of a final effector complex. The chain is DNA mismatch repair protein MutL from Pseudomonas entomophila (strain L48).